The sequence spans 89 residues: Small ribosomal subunit protein uS15 (89 aa).

It belongs to the universal ribosomal protein uS15 family. In terms of assembly, part of the 30S ribosomal subunit. Forms a bridge to the 50S subunit in the 70S ribosome, contacting the 23S rRNA.

One of the primary rRNA binding proteins, it binds directly to 16S rRNA where it helps nucleate assembly of the platform of the 30S subunit by binding and bridging several RNA helices of the 16S rRNA. Functionally, forms an intersubunit bridge (bridge B4) with the 23S rRNA of the 50S subunit in the ribosome. The protein is Small ribosomal subunit protein uS15 of Colwellia psychrerythraea (strain 34H / ATCC BAA-681) (Vibrio psychroerythus).